A 273-amino-acid chain; its full sequence is Suppressor protein STM1 (273 aa).

The tract at residues 1–153 (MSNPFDLLGN…PKTAQLSLQD (153 aa)) is disordered. Position 2 is an N-acetylserine (serine 2). Serine 32, serine 41, and serine 45 each carry phosphoserine; by MTOR. Lysine 46 participates in a covalent cross-link: Glycyl lysine isopeptide (Lys-Gly) (interchain with G-Cter in ubiquitin). Phosphoserine; by MTOR is present on residues serine 55 and serine 73. Serine 55 bears the Phosphoserine mark. Basic and acidic residues-rich tracts occupy residues 60–77 (AIRD…KDVT), 89–104 (RATD…DTKK), and 111–124 (GDDK…KEAQ). Serine 118 bears the Phosphoserine mark. Glycyl lysine isopeptide (Lys-Gly) (interchain with G-Cter in ubiquitin) cross-links involve residues lysine 121 and lysine 171. Phosphothreonine; by MTOR is present on threonine 181. A Glycyl lysine isopeptide (Lys-Gly) (interchain with G-Cter in ubiquitin) cross-link involves residue lysine 184. A Phosphothreonine; by MTOR modification is found at threonine 218. The tract at residues 219 to 273 (RKNFGDRNNNSRNNFNNRRGGRGARKGNNTANATNSANTVQKNRNIDVSNLPSLA) is disordered. 2 stretches are compositionally biased toward low complexity: residues 224-236 (DRNN…FNNR) and 244-257 (KGNN…SANT). Serine 229 carries the post-translational modification Phosphoserine. A compositionally biased stretch (polar residues) spans 258 to 273 (VQKNRNIDVSNLPSLA).

This sequence belongs to the SERBP1-HABP4 family. Associates with mature 80S ribosomes. Binds to the head domain of the 40S ribosomal subunit and prevents mRNA binding by inserting its alpha-helix domain towards the mRNA entry tunnel at the decoding site, where it blocks the binding of tRNA and mRNA at the A- and P-sites. Interacts with EFT1; interaction sequesters EFT1 at the A-site of the ribosome, thereby blocking the interaction sites of the mRNA-tRNA complex, promoting ribosome stabilization and hibernation. Interacts with CDC13. Associates with the telomere-proximal Y' element. In terms of processing, phosphorylation by TORC1 upon nutrient replenishment inhibits STM1 and causes its release from dormant ribosomes.

It is found in the cytoplasm. The protein resides in the nucleus. The protein localises to the perinuclear region. Ribosome preservation factor that protect a small pool of nontranslating, vacant ribosomes in cells under nutrient starvation conditions. Under nutrient-limiting conditions, cells reduce ribosome biogenesis and degrade ribosomes via autophagy (ribophagy) or proteasomal degradation. To avoid excessive degradation during starvation, STM1 binds to and protects 80S ribosomes from proteasomal degradation. Under nutrient-sufficient conditions, TORC1 phosphorylates and inhibits STM1 to prevent formation of dormant 80S ribosomes. Acts as an inhibitor of mRNA translation by promoting ribosome hibernation: clamps the two ribosomal subunits, thereby preventing their dissociation, and inhibits translation by excluding mRNA-binding. Acts via its association with eEF2 (EFT1), promoting ribosome stabilization and storage in an inactive state. May also repress translation by preventing association of eEF3 (YEF3 and HEF3) with ribosomes. Binds specifically G4 quadruplex (these are four-stranded right-handed helices, stabilized by guanine base quartets) and purine motif triplex (characterized by a third, antiparallel purine-rich DNA strand located within the major groove of a homopurine stretch of duplex DNA) nucleic acid structures. These structures may be present at telomeres or in rRNAs. Acts with CDC13 to control telomere length homeostasis. Involved in the control of the apoptosis-like cell death. In Saccharomyces cerevisiae (strain ATCC 204508 / S288c) (Baker's yeast), this protein is Suppressor protein STM1.